The chain runs to 22 residues: Major outer membrane protein (22 aa).

The protein belongs to the Gram-negative porin family. Disulfide bond interactions within and between MOMP molecules and other components form high molecular-weight oligomers.

Its subcellular location is the cell outer membrane. Functionally, structural rigidity of the outer membrane of elementary bodies and porin forming, permitting diffusion of solutes through the intracellular reticulate body membrane. The polypeptide is Major outer membrane protein (ompH) (Avibacterium gallinarum (Pasteurella gallinarum)).